A 330-amino-acid polypeptide reads, in one-letter code: Heat-inducible transcription repressor HrcA (330 aa).

Belongs to the HrcA family.

In terms of biological role, negative regulator of class I heat shock genes (grpE-dnaK-dnaJ and groELS operons). Prevents heat-shock induction of these operons. In Synechococcus sp. (strain RCC307), this protein is Heat-inducible transcription repressor HrcA.